A 279-amino-acid chain; its full sequence is Undecaprenyl-diphosphatase (279 aa).

Transmembrane regions (helical) follow at residues Met1–Ser21, Gly39–Phe59, Leu96–Val116, Phe128–Phe148, Ile155–Ile175, Phe201–Gly221, Tyr231–Leu251, and Phe259–Phe279.

Belongs to the UppP family.

The protein localises to the cell membrane. The enzyme catalyses di-trans,octa-cis-undecaprenyl diphosphate + H2O = di-trans,octa-cis-undecaprenyl phosphate + phosphate + H(+). Functionally, catalyzes the dephosphorylation of undecaprenyl diphosphate (UPP). Confers resistance to bacitracin. The protein is Undecaprenyl-diphosphatase of Tropheryma whipplei (strain TW08/27) (Whipple's bacillus).